The chain runs to 175 residues: Riboflavin kinase (175 aa).

54-59 contacts CDP; the sequence is GLGEGK. Residues threonine 83 and asparagine 85 each contribute to the Mg(2+) site. Positions 142 and 150 each coordinate FMN. 155-158 contributes to the CDP binding site; sequence FHLR.

This sequence belongs to the archaeal riboflavin kinase family. It depends on Mg(2+) as a cofactor.

It catalyses the reaction riboflavin + CTP = CDP + FMN + H(+). Its pathway is cofactor biosynthesis; FMN biosynthesis; FMN from riboflavin (CTP route): step 1/1. Functionally, catalyzes the CTP-dependent phosphorylation of riboflavin (vitamin B2) to form flavin mononucleotide (FMN). In Saccharolobus solfataricus (strain ATCC 35092 / DSM 1617 / JCM 11322 / P2) (Sulfolobus solfataricus), this protein is Riboflavin kinase.